A 119-amino-acid chain; its full sequence is Small ribosomal subunit protein uS13 (119 aa).

A disordered region spans residues 92–119 (RRGLPVRGQQTQTNARTRKGPRRGPASR).

It belongs to the universal ribosomal protein uS13 family. Part of the 30S ribosomal subunit. Forms a loose heterodimer with protein S19. Forms two bridges to the 50S subunit in the 70S ribosome.

Functionally, located at the top of the head of the 30S subunit, it contacts several helices of the 16S rRNA. In the 70S ribosome it contacts the 23S rRNA (bridge B1a) and protein L5 of the 50S subunit (bridge B1b), connecting the 2 subunits; these bridges are implicated in subunit movement. Contacts the tRNAs in the A and P-sites. The polypeptide is Small ribosomal subunit protein uS13 (Halorhodospira halophila (strain DSM 244 / SL1) (Ectothiorhodospira halophila (strain DSM 244 / SL1))).